The sequence spans 303 residues: Putative F-box protein At5g62060 (303 aa).

Positions 27 to 74 constitute an F-box domain; that stretch reads KSRYIDIPLDITVEILKKLPAKSLVRFQCVSKQWSTIIGSRRDFIDSI.

The chain is Putative F-box protein At5g62060 from Arabidopsis thaliana (Mouse-ear cress).